The primary structure comprises 580 residues: PTS system fructose-specific EIIB'BC component (580 aa).

PTS EIIB type-2 domains follow at residues 1–99 (MSSS…QLAA) and 120–215 (IVAI…KALA). The active-site Phosphocysteine intermediate; for EIIB activity is cysteine 126. Cysteine 126 is subject to Phosphocysteine; by EIIA. The 338-residue stretch at 243 to 580 (AYKHLMTGVS…LKKPVADVIA (338 aa)) folds into the PTS EIIC type-2 domain. A run of 9 helical transmembrane segments spans residues 254–274 (MLPF…LGGI), 289–309 (LFQI…AGYI), 332–352 (LNAG…GVAA), 369–389 (VLIL…YVFG), 410–430 (SALL…GGPV), 451–471 (AAAM…TWVF), 483–503 (ATAA…PYAA), 509–529 (TIPA…TAGA), and 549–571 (HLLN…LRLL).

The protein localises to the cell inner membrane. It catalyses the reaction D-fructose(out) + N(pros)-phospho-L-histidyl-[protein] = D-fructose 1-phosphate(in) + L-histidyl-[protein]. The phosphoenolpyruvate-dependent sugar phosphotransferase system (sugar PTS), a major carbohydrate active transport system, catalyzes the phosphorylation of incoming sugar substrates concomitantly with their translocation across the cell membrane. The enzyme II FruAB PTS system is involved in fructose transport. This is PTS system fructose-specific EIIB'BC component from Xanthomonas campestris pv. campestris (strain ATCC 33913 / DSM 3586 / NCPPB 528 / LMG 568 / P 25).